The chain runs to 301 residues: Mitochondrial carnitine/acylcarnitine carrier protein (301 aa).

Alanine 2 bears the N-acetylalanine mark. Over 2-12 (ADQPKPISPLK) the chain is Cytoplasmic. 3 Solcar repeats span residues 8–99 (ISPL…GKKL), 108–196 (LSYP…VKNI), and 207–293 (LSVP…AMKF). A helical membrane pass occupies residues 13–31 (NLLAGGFGGVCLVFVGHPL). Residues 32–73 (DTVKVRLQTQPPSLPGQPPMYSGTFDCFRKTLFREGIRGLYR) lie on the Mitochondrial matrix side of the membrane. Residues 74 to 93 (GMAAPIIGVTPMFAVCFFGF) form a helical membrane-spanning segment. The Cytoplasmic segment spans residues 94 to 112 (GLGKKLQQKHPEDVLSYPQ). The helical transmembrane segment at 113-131 (LFAAGMLSGIFTTGIMTPG) threads the bilayer. Residues 132 to 170 (ERIKCLLQIQASSGETKYTGTLDCAKKLYQEFGIRGIYK) are Mitochondrial matrix-facing. An N6-acetyllysine mark is found at lysine 148 and lysine 157. At lysine 170 the chain carries N6-acetyllysine; alternate. Lysine 170 is subject to N6-succinyllysine; alternate. Residues 171-190 (GTVVTLMRDVPASGMYFMTY) form a helical membrane-spanning segment. Over 191–211 (EWVKNIFTPEGKRVSELSVPR) the chain is Cytoplasmic. The chain crosses the membrane as a helical span at residues 212-230 (VLVAGGIAGIFNWAVAIPP). Residues 231 to 267 (DVLKSRFQTAPPGKYPNGFRDVLRELIPDEGVTSLYK) are Mitochondrial matrix-facing. The chain crosses the membrane as a helical span at residues 268–287 (GFNAVMIRAFPANAACFLGF). The Cytoplasmic portion of the chain corresponds to 288 to 301 (EVAMKFLNWATPNL).

Belongs to the mitochondrial carrier (TC 2.A.29) family.

The protein localises to the mitochondrion inner membrane. It carries out the reaction O-acetyl-(R)-carnitine(in) + (R)-carnitine(out) = O-acetyl-(R)-carnitine(out) + (R)-carnitine(in). It catalyses the reaction an O-acyl-(R)-carnitine(in) + (R)-carnitine(out) = an O-acyl-(R)-carnitine(out) + (R)-carnitine(in). The catalysed reaction is O-propanoyl-(R)-carnitine(in) + (R)-carnitine(out) = O-propanoyl-(R)-carnitine(out) + (R)-carnitine(in). The enzyme catalyses O-hexadecanoyl-(R)-carnitine(in) + (R)-carnitine(out) = O-hexadecanoyl-(R)-carnitine(out) + (R)-carnitine(in). It carries out the reaction O-octanoyl-(R)-carnitine(in) + (R)-carnitine(out) = O-octanoyl-(R)-carnitine(out) + (R)-carnitine(in). It catalyses the reaction (R)-carnitine(in) = (R)-carnitine(out). In terms of biological role, mediates the electroneutral exchange of acylcarnitines (O-acyl-(R)-carnitine or L-acylcarnitine) of different acyl chain lengths (ranging from O-acetyl-(R)-carnitine to long-chain O-acyl-(R)-carnitines) with free carnitine ((R)-carnitine or L-carnitine) across the mitochondrial inner membrane, via a ping-pong mechanism. Key player in the mitochondrial oxidation pathway, it translocates the fatty acids in the form of acylcarnitines into the mitochondrial matrix, where the carnitine palmitoyltransferase 2 (CPT-2) activates them to undergo fatty acid beta-oxidation. Catalyzes the unidirectional transport (uniport) of carnitine at lower rates than the antiport (exchange). The chain is Mitochondrial carnitine/acylcarnitine carrier protein (SLC25A20) from Macaca fascicularis (Crab-eating macaque).